The primary structure comprises 67 residues: Peptide Ctry2606 (67 aa).

The first 23 residues, Met1–Gly23, serve as a signal peptide directing secretion. Leucine amide is present on Leu33. Positions Ala37 to Tyr67 are excised as a propeptide.

Belongs to the non-disulfide-bridged peptide (NDBP) superfamily. Short antimicrobial peptide (group 4) family. In terms of tissue distribution, expressed by the venom gland.

The protein localises to the secreted. In terms of biological role, antimicrobial peptide. The protein is Peptide Ctry2606 of Chaerilus tryznai (Scorpion).